The primary structure comprises 252 residues: MRIDILSLFPNMFQATMGESIIGKAQDNGFIDINVTDFRQYTTDKHNHVDDAPFGGGAGMLLQAQPIFDAMDAIHEQTKDQYSKGRVILMDPAGRKFDQAYAKELAQEDHLTFICGHYEGYDERIRNLVTDEASLGDYVLTGGELAAMVMIDATVRFVPGVLGNMSSPMGDSFSNGLLEYPQYTRPADFRGMKVPEVLTSGNHQKIKEWRMRESLRRTLHRRPDLLKTAKLSREQQLMLEDIKLDEDPTVPD.

Residues Gly-116 and 135–140 (LGDYVL) contribute to the S-adenosyl-L-methionine site.

It belongs to the RNA methyltransferase TrmD family. Homodimer.

Its subcellular location is the cytoplasm. The catalysed reaction is guanosine(37) in tRNA + S-adenosyl-L-methionine = N(1)-methylguanosine(37) in tRNA + S-adenosyl-L-homocysteine + H(+). Functionally, specifically methylates guanosine-37 in various tRNAs. The sequence is that of tRNA (guanine-N(1)-)-methyltransferase from Limosilactobacillus reuteri (strain DSM 20016) (Lactobacillus reuteri).